The following is a 444-amino-acid chain: Multidrug resistance protein MdtA (444 aa).

The signal sequence occupies residues 1-20; the sequence is MKSQSKRTSRLFVFVGGVVA. The segment covering 37-52 has biased composition (polar residues); it reads NNTSGAQQSARGQDTS. 2 disordered regions span residues 37–60 and 398–444; these read NNTSGAQQSARGQDTSHGGRRNTP and TPRS…AEKS. A compositionally biased stretch (low complexity) spans 406-419; sequence ANPASAEKAAAEAE. Residues 435-444 show a composition bias toward polar residues; that stretch reads ARSTTAAEKS.

Belongs to the membrane fusion protein (MFP) (TC 8.A.1) family. In terms of assembly, part of a tripartite efflux system composed of MdtA, MdtB and MdtC.

The protein localises to the cell inner membrane. This is Multidrug resistance protein MdtA from Yersinia pseudotuberculosis serotype O:1b (strain IP 31758).